The chain runs to 101 residues: MFVKKGDKVRVIAGKDKGVEAVVLKAFPKINKVVVEGVAIVKKHQKPNNENPQGAIVEKEAPIHVSNVQVLDKNGVAGRVGYKVVDGKKVRYNKKSGEVLD.

This sequence belongs to the universal ribosomal protein uL24 family. As to quaternary structure, part of the 50S ribosomal subunit.

In terms of biological role, one of two assembly initiator proteins, it binds directly to the 5'-end of the 23S rRNA, where it nucleates assembly of the 50S subunit. Its function is as follows. One of the proteins that surrounds the polypeptide exit tunnel on the outside of the subunit. This is Large ribosomal subunit protein uL24 from Streptococcus mutans serotype c (strain ATCC 700610 / UA159).